A 344-amino-acid polypeptide reads, in one-letter code: Ribosomal RNA small subunit methyltransferase H 2 (344 aa).

S-adenosyl-L-methionine contacts are provided by residues 78–80 (GGH), Asp-98, Phe-131, Asp-145, and Gln-152.

It belongs to the methyltransferase superfamily. RsmH family.

The protein resides in the cytoplasm. The enzyme catalyses cytidine(1402) in 16S rRNA + S-adenosyl-L-methionine = N(4)-methylcytidine(1402) in 16S rRNA + S-adenosyl-L-homocysteine + H(+). Specifically methylates the N4 position of cytidine in position 1402 (C1402) of 16S rRNA. The polypeptide is Ribosomal RNA small subunit methyltransferase H 2 (Acholeplasma laidlawii (strain PG-8A)).